We begin with the raw amino-acid sequence, 148 residues long: Small ribosomal subunit protein bS6 (148 aa).

Residues 96 to 148 (HEEGQSAMLTRRDDRRERDGDDRPRRREGGFDRGDRGDRGPRRPRDNEAGEGA) form a disordered region.

Belongs to the bacterial ribosomal protein bS6 family.

Its function is as follows. Binds together with bS18 to 16S ribosomal RNA. The protein is Small ribosomal subunit protein bS6 of Brucella melitensis biotype 1 (strain ATCC 23456 / CCUG 17765 / NCTC 10094 / 16M).